A 220-amino-acid chain; its full sequence is UPF0319 protein YccT (220 aa).

An N-terminal signal peptide occupies residues 1–20 (MKAGTLTLLIALCLPISVSA).

This sequence belongs to the UPF0319 family.

In Escherichia fergusonii (strain ATCC 35469 / DSM 13698 / CCUG 18766 / IAM 14443 / JCM 21226 / LMG 7866 / NBRC 102419 / NCTC 12128 / CDC 0568-73), this protein is UPF0319 protein YccT.